Consider the following 401-residue polypeptide: Coenzyme A biosynthesis bifunctional protein CoaBC (401 aa).

Residues Met1–Ser190 are phosphopantothenoylcysteine decarboxylase. Cys159 (proton donor) is an active-site residue. A phosphopantothenate--cysteine ligase region spans residues Ile191 to His401. CTP contacts are provided by residues Asp279, Lys289, Pro307 to Val310, Phe326, Lys340, and Lys344.

The protein in the N-terminal section; belongs to the HFCD (homo-oligomeric flavin containing Cys decarboxylase) superfamily. This sequence in the C-terminal section; belongs to the PPC synthetase family. The cofactor is Mg(2+). FMN serves as cofactor.

It catalyses the reaction N-[(R)-4-phosphopantothenoyl]-L-cysteine + H(+) = (R)-4'-phosphopantetheine + CO2. The catalysed reaction is (R)-4'-phosphopantothenate + L-cysteine + CTP = N-[(R)-4-phosphopantothenoyl]-L-cysteine + CMP + diphosphate + H(+). It participates in cofactor biosynthesis; coenzyme A biosynthesis; CoA from (R)-pantothenate: step 2/5. The protein operates within cofactor biosynthesis; coenzyme A biosynthesis; CoA from (R)-pantothenate: step 3/5. Its function is as follows. Catalyzes two sequential steps in the biosynthesis of coenzyme A. In the first step cysteine is conjugated to 4'-phosphopantothenate to form 4-phosphopantothenoylcysteine. In the second step the latter compound is decarboxylated to form 4'-phosphopantotheine. In Vibrio vulnificus (strain CMCP6), this protein is Coenzyme A biosynthesis bifunctional protein CoaBC.